Consider the following 312-residue polypeptide: MELLALRWVLLAGTLLSTSAASSALQEGDLGSITVIMDMAPNSFDDQYVGCAHVMWANLQKLKCTEFARNYAYAVGWRKAAAEWQKRWGYLAHPMQLRPEQAIALLAYSAASNLYQQFNAATRQGGCSHQYYVHFYHFKTLHFLLTQALFALRASQPRCYYVYRGVRGIRFMTQRGKSVRFGQFTSTSLRKDVAVNFGQDTFFVVKTCYGVPIKQFSFYPSEDEVLIPPFEVFEVTNFCTGNGRIQIYLRSKGKMSRHNCELLKPRGGQWGRGHQEVGLGLSPGLALPVLPCSNCSCWGSGHRAGDPIPAAV.

A signal peptide spans 1 to 20 (MELLALRWVLLAGTLLSTSA). The propeptide occupies 21–31 (ASSALQEGDLG). Disulfide bonds link C51–C260 and C159–C208. The 186-residue stretch at 71–256 (YAYAVGWRKA…IYLRSKGKMS (186 aa)) folds into the TR mART core domain. The NAD(+) site is built by Y108, R164, and Q183. Residue R164 is part of the active site. The active site involves S186. S217 contributes to the NAD(+) binding site. E224 is an active-site residue. A propeptide spanning residues 267–312 (GGQWGRGHQEVGLGLSPGLALPVLPCSNCSCWGSGHRAGDPIPAAV) is cleaved from the precursor.

The protein belongs to the Arg-specific ADP-ribosyltransferase family.

The protein resides in the secreted. Its subcellular location is the extracellular space. It carries out the reaction L-arginyl-[protein] + NAD(+) = N(omega)-(ADP-D-ribosyl)-L-arginyl-[protein] + nicotinamide + H(+). This chain is NAD(P)(+)--arginine ADP-ribosyltransferase 2, found in Gallus gallus (Chicken).